The primary structure comprises 145 residues: Catabolic 3-dehydroquinase (145 aa).

Tyr-24 (proton acceptor) is an active-site residue. Substrate-binding residues include Asn-77, His-83, and Asp-90. Catalysis depends on His-103, which acts as the Proton donor. Substrate is bound by residues 104–105 (IT) and Arg-114.

This sequence belongs to the type-II 3-dehydroquinase family. In terms of assembly, homododecamer. Adopts a ring-like structure, composed of an arrangement of two hexameric rings stacked on top of one another.

The catalysed reaction is 3-dehydroquinate = 3-dehydroshikimate + H2O. Its pathway is aromatic compound metabolism; 3,4-dihydroxybenzoate biosynthesis; 3,4-dihydroxybenzoate from 3-dehydroquinate: step 1/2. Its function is as follows. Is involved in the catabolism of quinate. Allows the utilization of quinate as carbon source via the beta-ketoadipate pathway. In Clavispora lusitaniae (strain ATCC 42720) (Yeast), this protein is Catabolic 3-dehydroquinase.